The sequence spans 178 residues: MTGYPDVAAFDLDYTIWPCYCDTHLHGPFKPVKSSNGEVLTIICRDGYELTIYKDIPRILGDLKDNGVKLMTASRTWAPEIAQEILKIFKVKYAGVVTPLANLFDEFQWGERSKIGHLRDGLKDLYNTSDLKSKKICLFDDESRNKEVEKYGVKFVYVRDPENGPSWKLYQDYLSGKV.

The Nucleophile role is filled by aspartate 11. Aspartate 11 lines the Mg(2+) pocket. Residues leucine 12, aspartate 13, serine 74, and arginine 75 each coordinate phosphate. Aspartate 13 serves as a coordination point for Mg(2+). Catalysis depends on aspartate 13, which acts as the Proton donor. Arginine 75 is a substrate binding site. Mg(2+) is bound at residue aspartate 141.

This sequence belongs to the HAD-like hydrolase superfamily.

It is found in the cytoplasm. Its subcellular location is the nucleus. The enzyme catalyses O-phospho-L-tyrosyl-[protein] + H2O = L-tyrosyl-[protein] + phosphate. Functionally, magnesium-dependent phosphatase which may act as a tyrosine phosphatase. The chain is Putative magnesium-dependent phosphatase YER134C from Saccharomyces cerevisiae (strain ATCC 204508 / S288c) (Baker's yeast).